The sequence spans 263 residues: Elongin-A (263 aa).

Disordered stretches follow at residues 112-147 (KLEQ…YCPK) and 170-263 (SATS…PKRI). Polar residues-rich tracts occupy residues 186–206 (RSSS…NTYP) and 214–229 (SFTS…VKTQ). The segment covering 230 to 245 (PSSSSSPSISRPTSFP) has biased composition (low complexity). Positions 253–263 (SRFSSQVPKRI) are enriched in polar residues.

Belongs to the ELA1 family. In terms of assembly, heterodimer with elc1. Component of a CRL3 E3 ubiquitin ligase complex consisting of a cullin, the linker protein elc1, the substrate receptor pof4/ela1, and the RING protein rbx1. Interacts with skp1.

Its function is as follows. As part of the CRL3 E3 ubiquitin ligase complex; polyubiquitylates monoubiquitylated RNA polymerase II subunit rpb1 to trigger its proteolysis; plays a role in global genomic repair. The protein is Elongin-A (pof4) of Schizosaccharomyces pombe (strain 972 / ATCC 24843) (Fission yeast).